Consider the following 158-residue polypeptide: Proteinase inhibitor type-2 (158 aa).

Residues 1-24 form the signal peptide; that stretch reads MAIHKEVSFLAYLLVLGMLLFVSA. Repeat copies occupy residues 29-86 and 87-146. 8 disulfide bridges follow: C33–C121, C37–C117, C45–C127, C57–C94, C60–C78, C61–C90, C67–C103, and C120–C138.

The protein belongs to the protease inhibitor I20 (potato type II proteinase inhibitor) family.

The protein is Proteinase inhibitor type-2 of Solanum tuberosum (Potato).